We begin with the raw amino-acid sequence, 141 residues long: Small ribosomal subunit protein uS8c (141 aa).

It belongs to the universal ribosomal protein uS8 family. In terms of assembly, part of the 30S ribosomal subunit.

It localises to the plastid. The protein localises to the chloroplast. Its function is as follows. One of the primary rRNA binding proteins, it binds directly to 16S rRNA central domain where it helps coordinate assembly of the platform of the 30S subunit. This Pleurastrum terricola (Filamentous green alga) protein is Small ribosomal subunit protein uS8c (rps8).